Reading from the N-terminus, the 254-residue chain is Trypsin 3A1 (254 aa).

A signal peptide spans 1–20; it reads MNQFLFVSFCALLGLSQVSA. The propeptide at 21-27 is activation peptide; that stretch reads ATLSSGR. The Peptidase S1 domain maps to 28 to 253; the sequence is IVGGFQIDIA…VRQWIREVSE (226 aa). Cys53 and Cys69 form a disulfide bridge. Active-site charge relay system residues include His68 and Asp113. Intrachain disulfides connect Cys178–Cys194 and Cys205–Cys229. Ser209 acts as the Charge relay system in catalysis.

It belongs to the peptidase S1 family. As to expression, midgut.

Its subcellular location is the secreted. It is found in the extracellular space. It catalyses the reaction Preferential cleavage: Arg-|-Xaa, Lys-|-Xaa.. Its function is as follows. Major function may be to aid in digestion of the blood meal. The chain is Trypsin 3A1 from Aedes aegypti (Yellowfever mosquito).